A 119-amino-acid chain; its full sequence is Large ribosomal subunit protein bL20c (119 aa).

Belongs to the bacterial ribosomal protein bL20 family.

The protein localises to the plastid. Its subcellular location is the chloroplast. Binds directly to 23S ribosomal RNA and is necessary for the in vitro assembly process of the 50S ribosomal subunit. It is not involved in the protein synthesizing functions of that subunit. This is Large ribosomal subunit protein bL20c (rpl20) from Oryza sativa (Rice).